The primary structure comprises 111 residues: Phosphoribosyl-AMP cyclohydrolase (111 aa).

Asp80 contributes to the Mg(2+) binding site. Cys81 is a Zn(2+) binding site. 2 residues coordinate Mg(2+): Asp82 and Asp84. Zn(2+) is bound by residues Cys97 and Cys104.

The protein belongs to the PRA-CH family. As to quaternary structure, homodimer. Mg(2+) serves as cofactor. Requires Zn(2+) as cofactor.

It is found in the cytoplasm. It catalyses the reaction 1-(5-phospho-beta-D-ribosyl)-5'-AMP + H2O = 1-(5-phospho-beta-D-ribosyl)-5-[(5-phospho-beta-D-ribosylamino)methylideneamino]imidazole-4-carboxamide. The protein operates within amino-acid biosynthesis; L-histidine biosynthesis; L-histidine from 5-phospho-alpha-D-ribose 1-diphosphate: step 3/9. In terms of biological role, catalyzes the hydrolysis of the adenine ring of phosphoribosyl-AMP. The sequence is that of Phosphoribosyl-AMP cyclohydrolase from Mycobacterium ulcerans (strain Agy99).